The primary structure comprises 98 residues: Ubiquitin-related modifier 1 (98 aa).

A 1-thioglycine modification is found at Gly-98. Gly-98 participates in a covalent cross-link: Glycyl lysine isopeptide (Gly-Lys) (interchain with K-? in acceptor proteins).

It belongs to the URM1 family. Post-translationally, C-terminal thiocarboxylation occurs in 2 steps, it is first acyl-adenylated (-COAMP) via the hesA/moeB/thiF part of UBA4, then thiocarboxylated (-COSH) via the rhodanese domain of UBA4.

It localises to the cytoplasm. It participates in tRNA modification; 5-methoxycarbonylmethyl-2-thiouridine-tRNA biosynthesis. In terms of biological role, acts as a sulfur carrier required for 2-thiolation of mcm(5)S(2)U at tRNA wobble positions of cytosolic tRNA(Lys), tRNA(Glu) and tRNA(Gln). Serves as sulfur donor in tRNA 2-thiolation reaction by being thiocarboxylated (-COSH) at its C-terminus by the MOCS3 homolog UBA4. The sulfur is then transferred to tRNA to form 2-thiolation of mcm(5)S(2)U. Prior mcm(5) tRNA modification by the elongator complex is required for 2-thiolation. Also acts as a ubiquitin-like protein (UBL) that is covalently conjugated via an isopeptide bond to lysine residues of target proteins such as AHP1. The thiocarboxylated form serves as substrate for conjugation and oxidative stress specifically induces the formation of UBL-protein conjugates. The chain is Ubiquitin-related modifier 1 from Candida glabrata (strain ATCC 2001 / BCRC 20586 / JCM 3761 / NBRC 0622 / NRRL Y-65 / CBS 138) (Yeast).